We begin with the raw amino-acid sequence, 96 residues long: Co-chaperonin GroES (96 aa).

Belongs to the GroES chaperonin family. As to quaternary structure, heptamer of 7 subunits arranged in a ring. Interacts with the chaperonin GroEL.

The protein resides in the cytoplasm. Together with the chaperonin GroEL, plays an essential role in assisting protein folding. The GroEL-GroES system forms a nano-cage that allows encapsulation of the non-native substrate proteins and provides a physical environment optimized to promote and accelerate protein folding. GroES binds to the apical surface of the GroEL ring, thereby capping the opening of the GroEL channel. The chain is Co-chaperonin GroES from Buchnera aphidicola subsp. Acyrthosiphon pisum (strain 5A).